Consider the following 654-residue polypeptide: MLFSRPPIRSPWISAFRSASQLPLSRPRFFSISLSRYSVDMETVNTSERLSRLRELMQEHKVDVYIVPSEDSHQSEYIAPCDGRREFISGFSGSAGTAIVSLSKAALSTDGRYFNQASKQLDNNWQLLKRGVEGFPTWQEWTTEQAEGGKVVGVDPALITASGARSLSETLKKNGSTLVGVQQNLVDLVWGKDRPAPPREKVRVHPEKYAGKSFQEKISELRKELESRKSAGFIVSMLDEIAWLFNLRGSDIPYNPVFFSFATITPTTTELYVDADKLTPEVTAHLGQDVVIKPYDAIYADAKALSETRKQEAGETASKFLLSNKASWALSLSLGGEGQVEEVRSPIGDAKAVKNDVELAGMRACHIRDGAALTEYFAWLENELVNKKSTLDEVDAADKLEQIRSKHDLFVGLSFDTISSTGPNGAVIHYKPEKGSCSIIDPNAIYLCDSGAQYLDGTTDVTRTFHFGQPTELEKKAFTLVLKGVIGLDTAVFPKGTSGFALDVLARQYLWKEGLDYLHGTGHGIGSYLNVHEGPIGVGTRVQYTEVPIAPGNVISDEPGFYEDGKFGIRIENVIMAREVQTTHKFGDKPWLGFEHVTMAPIGRNLIEPSLLSDAELKWVNDYHREIWEKTHHFFENDEYTRSWLQRETQPISK.

The Mn(2+) site is built by Asp-449, Asp-460, Glu-558, and Glu-572.

It belongs to the peptidase M24B family. Requires Mn(2+) as cofactor.

It carries out the reaction Release of any N-terminal amino acid, including proline, that is linked to proline, even from a dipeptide or tripeptide.. Functionally, catalyzes the removal of a penultimate prolyl residue from the N-termini of peptides. This chain is Probable Xaa-Pro aminopeptidase P (ampp), found in Aspergillus flavus (strain ATCC 200026 / FGSC A1120 / IAM 13836 / NRRL 3357 / JCM 12722 / SRRC 167).